Here is a 558-residue protein sequence, read N- to C-terminus: Phosphatidylserine lipase ABHD16A (558 aa).

Helical transmembrane passes span 60 to 80 (ILAL…FAFF) and 93 to 113 (VVPF…VACL). Topologically, residues 114–558 (RGIGRWTNPQ…AQNFQMPWHL (445 aa)) are cytoplasmic. The AB hydrolase-1 domain occupies 281 to 407 (LVICCEGNAG…LVTRTVRQHL (127 aa)). Active-site charge relay system residues include Ser-355, Asp-430, and His-507.

This sequence belongs to the AB hydrolase superfamily. ABHD16 family.

The protein resides in the membrane. The catalysed reaction is 1-heptadecanoyl-2-(5Z,8Z,11Z,14Z-eicosatetraenoyl)-sn-glycero-3-phosphoserine + H2O = 1-heptadecanoyl-sn-glycero-3-phosphoserine + (5Z,8Z,11Z,14Z)-eicosatetraenoate + H(+). It catalyses the reaction 1-hexadecanoyl-2-(9Z-octadecenoyl)-sn-glycero-3-phospho-L-serine + H2O = 1-hexadecanoyl-sn-glycero-3-phospho-L-serine + (9Z)-octadecenoate + H(+). It carries out the reaction 1-octadecanoyl-2-(9Z,12Z-octadecadienoyl)-sn-glycero-3-phosphoserine + H2O = 1-octadecanoyl-sn-glycero-3-phosphoserine + (9Z,12Z)-octadecadienoate + H(+). The enzyme catalyses 1-heptadecanoyl-2-(5Z,8Z,11Z,14Z-eicosatetraenoyl)-sn-glycero-3-phosphocholine + H2O = 1-heptadecanoyl-sn-glycero-3-phosphocholine + (5Z,8Z,11Z,14Z)-eicosatetraenoate + H(+). The catalysed reaction is 1-hexadecanoyl-2-(9Z-octadecenoyl)-sn-glycero-3-phosphoglycerol + H2O = 1-hexadecanoyl-sn-glycero-3-phosphoglycerol + (9Z)-octadecenoate + H(+). It catalyses the reaction 1-hexadecanoyl-2-(9Z-octadecenoyl)-sn-glycero-3-phospho-(1D-myo-inositol) + H2O = 1-hexadecanoyl-sn-glycero-3-phospho-(1D-myo-inositol) + (9Z)-octadecenoate + H(+). It carries out the reaction 1-heptadecanoyl-2-(5Z,8Z,11Z,14Z-eicosatetraenoyl)-sn-glycero-3-phosphoethanolamine + H2O = 1-heptadecanoyl-sn-glycero-3-phosphoethanolamine + (5Z,8Z,11Z,14Z)-eicosatetraenoate + H(+). The enzyme catalyses 1-hexadecanoyl-2-(9Z-octadecenoyl)-sn-glycero-3-phospho-(1'-sn-glycerol) + H2O = 1-hexadecanoyl-sn-glycero-3-phospho-(1'-sn-glycerol) + (9Z)-octadecenoate + H(+). The catalysed reaction is Hydrolyzes glycerol monoesters of long-chain fatty acids.. It catalyses the reaction 1-tetradecanoylglycerol + H2O = tetradecanoate + glycerol + H(+). It carries out the reaction 2-hexadecanoylglycerol + H2O = glycerol + hexadecanoate + H(+). The enzyme catalyses 1-(9Z-octadecenoyl)-glycerol + H2O = glycerol + (9Z)-octadecenoate + H(+). The catalysed reaction is 2-(9Z-octadecenoyl)-glycerol + H2O = glycerol + (9Z)-octadecenoate + H(+). It catalyses the reaction 2-(9Z,12Z-octadecadienoyl)-glycerol + H2O = (9Z,12Z)-octadecadienoate + glycerol + H(+). It carries out the reaction 1-(5Z,8Z,11Z,14Z-eicosatetraenoyl)-glycerol + H2O = glycerol + (5Z,8Z,11Z,14Z)-eicosatetraenoate + H(+). The enzyme catalyses 2-(5Z,8Z,11Z,14Z-eicosatetraenoyl)-glycerol + H2O = glycerol + (5Z,8Z,11Z,14Z)-eicosatetraenoate + H(+). The catalysed reaction is prostaglandin D2-1-glycerol ester + H2O = prostaglandin D2 + glycerol + H(+). It catalyses the reaction 2-glyceryl-15-deoxy-Delta(12,14)-prostaglandin J2 + H2O = 15-deoxy-Delta(12,14)-prostaglandin J2 + glycerol + H(+). It carries out the reaction 1-(9Z,12Z-octadecadienoyl)-glycerol + H2O = (9Z,12Z)-octadecadienoate + glycerol + H(+). In terms of biological role, phosphatidylserine (PS) lipase that mediates the hydrolysis of phosphatidylserine to generate lysophosphatidylserine (LPS). LPS constitutes a class of signaling lipids that regulates immunological and neurological processes. Has no activity towards diacylglycerol, triacylglycerol or lysophosphatidylserine lipase. Also has monoacylglycerol lipase activity, with preference for 1-(9Z,12Z-octadecadienoyl)-glycerol (1-LG) and 2-glyceryl-15-deoxy-Delta(12,14)-prostaglandin J2 (15d-PGJ(2)-G). In Pongo abelii (Sumatran orangutan), this protein is Phosphatidylserine lipase ABHD16A.